Reading from the N-terminus, the 599-residue chain is DNA primase (599 aa).

A CHC2-type zinc finger spans residues 38-62; sequence CPFHDEKTPSFTVSEDKQICHCFGC. The region spanning 260–341 is the Toprim domain; that stretch reads DEIVLLEGFM…NVFVIQLPSG (82 aa). Residues glutamate 266, aspartate 310, and aspartate 312 each contribute to the Mg(2+) site.

This sequence belongs to the DnaG primase family. In terms of assembly, monomer. Interacts with DnaB. It depends on Zn(2+) as a cofactor. Mg(2+) is required as a cofactor.

The enzyme catalyses ssDNA + n NTP = ssDNA/pppN(pN)n-1 hybrid + (n-1) diphosphate.. In terms of biological role, RNA polymerase that catalyzes the synthesis of short RNA molecules used as primers for DNA polymerase during DNA replication. The sequence is that of DNA primase from Staphylococcus aureus (strain MRSA252).